Here is a 338-residue protein sequence, read N- to C-terminus: Mitoferrin-1 (338 aa).

The disordered stretch occupies residues 1-42; the sequence is MELRSGSVGSQAVARRMDGDSRDGGGGKDATGSEDYENLPTS. Positions 15 to 26 are enriched in basic and acidic residues; the sequence is RRMDGDSRDGGG. Solcar repeat units follow at residues 43-131, 141-225, and 232-326; these read ASVS…MKRT, NSHL…LQEQ, and YNPQ…FKYF. Transmembrane regions (helical) follow at residues 45–64, 106–125, 143–162, 200–219, 234–253, and 301–320; these read VSTHMTAGAMAGILEHSVMY, GVNVMIMGAGPAHAMYFACY, HLANGIAGSMATLLHDAVMN, SYTTQLTMNIPFQSIHFITY, PQSHIISGGLAGALAAAATT, and GIQARVIYQMPSTAISWSVY.

Belongs to the mitochondrial carrier (TC 2.A.29) family. In terms of assembly, interacts with ACB10; this interaction stabilizes SLC25A37 and enhances the function of SLC25A37 to import mitochondrial iron during erythroid differentiation.

The protein resides in the mitochondrion inner membrane. It catalyses the reaction Fe(2+)(in) = Fe(2+)(out). Mitochondrial iron transporter that specifically mediates iron uptake in developing erythroid cells, thereby playing an essential role in heme biosynthesis. The polypeptide is Mitoferrin-1 (SLC25A37) (Homo sapiens (Human)).